A 387-amino-acid chain; its full sequence is Enoyl-[acyl-carrier-protein] reductase 2, mitochondrial (387 aa).

A mitochondrion-targeting transit peptide spans 1–23; the sequence is MYRNQLARASLRSTSSINQIRNM. The active-site Proton donor is the Tyr-79. NADP(+) contacts are provided by residues Asn-172, 199–202, 222–224, 297–300, 322–324, and Lys-382; these read NSAV, RDR, YGGM, and FWV.

This sequence belongs to the zinc-containing alcohol dehydrogenase family. Quinone oxidoreductase subfamily. Homodimer.

It localises to the mitochondrion matrix. The catalysed reaction is a 2,3-saturated acyl-[ACP] + NADP(+) = a (2E)-enoyl-[ACP] + NADPH + H(+). In terms of biological role, catalyzes the NADPH-dependent reduction of trans-2-enoyl thioesters in mitochondrial fatty acid synthesis (fatty acid synthesis type II). Fatty acid chain elongation in mitochondria uses acyl carrier protein (ACP) as an acyl group carrier, but the enzyme accepts both ACP and CoA thioesters as substrates in vitro. Required for respiration and the maintenance of the mitochondrial compartment. The sequence is that of Enoyl-[acyl-carrier-protein] reductase 2, mitochondrial (ETR2) from Debaryomyces hansenii (strain ATCC 36239 / CBS 767 / BCRC 21394 / JCM 1990 / NBRC 0083 / IGC 2968) (Yeast).